Reading from the N-terminus, the 154-residue chain is Myoglobin (154 aa).

Residues 2–148 enclose the Globin domain; the sequence is ELSDQEWKHV…FRNDMASKYK (147 aa). Nitrite is bound at residue histidine 65. Histidine 65 is a binding site for O2. A heme b-binding site is contributed by histidine 94.

Belongs to the globin family. Monomeric.

It localises to the cytoplasm. Its subcellular location is the sarcoplasm. The enzyme catalyses Fe(III)-heme b-[protein] + nitric oxide + H2O = Fe(II)-heme b-[protein] + nitrite + 2 H(+). It carries out the reaction H2O2 + AH2 = A + 2 H2O. Its function is as follows. Monomeric heme protein which primary function is to store oxygen and facilitate its diffusion within muscle tissues. Reversibly binds oxygen through a pentacoordinated heme iron and enables its timely and efficient release as needed during periods of heightened demand. Depending on the oxidative conditions of tissues and cells, and in addition to its ability to bind oxygen, it also has a nitrite reductase activity whereby it regulates the production of bioactive nitric oxide. Under stress conditions, like hypoxia and anoxia, it also protects cells against reactive oxygen species thanks to its pseudoperoxidase activity. The protein is Myoglobin (MB) of Alligator mississippiensis (American alligator).